A 514-amino-acid chain; its full sequence is Alpha-amylase (514 aa).

The N-terminal stretch at 1 to 31 (MIQKRKRTVSFRLVLMCTLLFVSLPITKTSA) is a signal peptide. Residues N133, D190, A212, D214, D225, D231, D233, and D235 each contribute to the Ca(2+) site. D190 contacts Na(+). Residues D214, D225, and D231 each coordinate Na(+). The Nucleophile role is filled by D262. Ca(2+) is bound at residue H266. E292 (proton donor) is an active-site residue. Residues G331, D438, and D461 each coordinate Ca(2+).

The protein belongs to the glycosyl hydrolase 13 family. Monomer. The cofactor is Ca(2+). Requires Na(+) as cofactor.

The protein localises to the secreted. The enzyme catalyses Endohydrolysis of (1-&gt;4)-alpha-D-glucosidic linkages in polysaccharides containing three or more (1-&gt;4)-alpha-linked D-glucose units.. The protein is Alpha-amylase of Bacillus amyloliquefaciens (Bacillus velezensis).